The following is a 497-amino-acid chain: Guanosine-5'-triphosphate,3'-diphosphate pyrophosphatase (497 aa).

Belongs to the GppA/Ppx family. GppA subfamily.

The catalysed reaction is guanosine 3'-diphosphate 5'-triphosphate + H2O = guanosine 3',5'-bis(diphosphate) + phosphate + H(+). It participates in purine metabolism; ppGpp biosynthesis; ppGpp from GTP: step 2/2. Its function is as follows. Catalyzes the conversion of pppGpp to ppGpp. Guanosine pentaphosphate (pppGpp) is a cytoplasmic signaling molecule which together with ppGpp controls the 'stringent response', an adaptive process that allows bacteria to respond to amino acid starvation, resulting in the coordinated regulation of numerous cellular activities. This Vibrio parahaemolyticus serotype O3:K6 (strain RIMD 2210633) protein is Guanosine-5'-triphosphate,3'-diphosphate pyrophosphatase.